A 195-amino-acid chain; its full sequence is Probable molybdenum cofactor guanylyltransferase (195 aa).

GTP is bound by residues 9–11 (LAG), Lys21, Asp69, and Asp100. Mg(2+) is bound at residue Asp100.

The protein belongs to the MobA family. Requires Mg(2+) as cofactor.

It localises to the cytoplasm. It catalyses the reaction Mo-molybdopterin + GTP + H(+) = Mo-molybdopterin guanine dinucleotide + diphosphate. Its function is as follows. Transfers a GMP moiety from GTP to Mo-molybdopterin (Mo-MPT) cofactor (Moco or molybdenum cofactor) to form Mo-molybdopterin guanine dinucleotide (Mo-MGD) cofactor. In Geobacillus sp. (strain WCH70), this protein is Probable molybdenum cofactor guanylyltransferase.